The primary structure comprises 253 residues: Regulatory protein VirG (253 aa).

In terms of domain architecture, Response regulatory spans 15–129 (HVLVIDDDVA…EFLARIRVAL (115 aa)). A 4-aspartylphosphate modification is found at Asp64. A DNA-binding region (ompR/PhoB-type) is located at residues 141-241 (RRSFSFADWT…ARGAGYFFDA (101 aa)).

Post-translationally, phosphorylated by wide host range (WHR) VirA protein.

It localises to the cytoplasm. In terms of biological role, virG is required for the positive regulation of at least two vir loci encoded by the Ti plasmid of A.tumefaciens. This is Regulatory protein VirG (virG) from Agrobacterium fabrum (strain C58 / ATCC 33970) (Agrobacterium tumefaciens (strain C58)).